Consider the following 365-residue polypeptide: 3-isopropylmalate dehydrogenase (365 aa).

78–91 provides a ligand contact to NAD(+); that stretch reads GKKWNNLPIEKRPE. 4 residues coordinate substrate: Arg99, Arg109, Arg139, and Asp228. Residues Asp228, Asp252, and Asp256 each coordinate Mg(2+). 286–298 contacts NAD(+); sequence GSAPDIAGKNIAN.

The protein belongs to the isocitrate and isopropylmalate dehydrogenases family. LeuB type 1 subfamily. As to quaternary structure, homodimer. Mg(2+) is required as a cofactor. Mn(2+) serves as cofactor.

It localises to the cytoplasm. It catalyses the reaction (2R,3S)-3-isopropylmalate + NAD(+) = 4-methyl-2-oxopentanoate + CO2 + NADH. Its pathway is amino-acid biosynthesis; L-leucine biosynthesis; L-leucine from 3-methyl-2-oxobutanoate: step 3/4. Functionally, catalyzes the oxidation of 3-carboxy-2-hydroxy-4-methylpentanoate (3-isopropylmalate) to 3-carboxy-4-methyl-2-oxopentanoate. The product decarboxylates to 4-methyl-2 oxopentanoate. The polypeptide is 3-isopropylmalate dehydrogenase (Buchnera aphidicola subsp. Macrosiphoniella ludovicianae).